We begin with the raw amino-acid sequence, 273 residues long: Beta-lactamase OXA-23 (273 aa).

Positions 1–17 are cleaved as a signal peptide; it reads MNKYFTCYVVASLFLSG. The active-site Acyl-ester intermediate is serine 79. Positions 79, 82, 126, 217, 219, and 259 each coordinate a beta-lactam. Lysine 82 carries the post-translational modification N6-carboxylysine.

The protein belongs to the class-D beta-lactamase family. Monomer. In terms of processing, carboxylated on the epsilon-amino group of a lysine, with the resulting carbamate functional group serving as a general base. Probably N-carboxylated at Lys-82 at neutral pH in vivo and undergoes complete N-decarboxylation, at pH 4.1, in vitro.

It localises to the periplasm. It catalyses the reaction a beta-lactam + H2O = a substituted beta-amino acid. With respect to regulation, inhibited by the desmethyl carbapenem, MA-1-206, via a covalent binding to Ser-79. Its function is as follows. Class D beta-lactamase which confers resistance to the beta-lactam antibiotics, including ampicillin, and carbapenems such as imipenem and meropenem. Acts via hydrolysis of the beta-lactam ring. Has penicillin-, cephalosporin- and carbapenem-hydrolyzing activities, but lacks ceftazidime-hydrolyzing activity. The sequence is that of Beta-lactamase OXA-23 from Acinetobacter baumannii.